Reading from the N-terminus, the 130-residue chain is uncharacterized protein (130 aa).

Positions 1 to 28 (MELAKERNGPHQKHHGQCQNHCTSPNTV) are disordered. Residues 17 to 28 (QCQNHCTSPNTV) show a composition bias toward polar residues.

This is an uncharacterized protein from Saccharomyces cerevisiae (strain ATCC 204508 / S288c) (Baker's yeast).